A 1033-amino-acid polypeptide reads, in one-letter code: Ubiquitin carboxyl-terminal hydrolase 48 (1033 aa).

The USP domain occupies 89-419 (VGLTNLGATC…NAYMLVYRLQ (331 aa)). Cysteine 98 serves as the catalytic Nucleophile. The Proton acceptor role is filled by histidine 351. 3 consecutive DUSP domains span residues 457–552 (QSVA…KALC), 567–690 (NQLN…NKEC), and 710–823 (MMAS…RTRA). The segment at 610–639 (EQDEDAEHSNGKLNGNAPNKDEVNEEKREE) is disordered. The segment at 878–920 (APELNVSSSEAEEEREENKPEGEQDPDFNQSNGGAKRQKLSHQ) is disordered. The Ubiquitin-like domain maps to 931-1007 (RRSTRHRKVR…ILLKADEPIA (77 aa)).

This sequence belongs to the peptidase C19 family.

The protein localises to the cytoplasm. The protein resides in the nucleus. It catalyses the reaction Thiol-dependent hydrolysis of ester, thioester, amide, peptide and isopeptide bonds formed by the C-terminal Gly of ubiquitin (a 76-residue protein attached to proteins as an intracellular targeting signal).. Functionally, recognizes and hydrolyzes the peptide bond at the C-terminal Gly of ubiquitin. Involved in the processing of poly-ubiquitin precursors as well as that of ubiquitinated proteins. The chain is Ubiquitin carboxyl-terminal hydrolase 48 (USP48) from Gallus gallus (Chicken).